Here is a 414-residue protein sequence, read N- to C-terminus: Tryptophan synthase beta chain (414 aa).

A compositionally biased stretch (basic and acidic residues) spans 1–26 (MVSTFSRKDQNYKNDDLNQPSKEGRF). Residues 1–27 (MVSTFSRKDQNYKNDDLNQPSKEGRFG) are disordered. At Lys109 the chain carries N6-(pyridoxal phosphate)lysine.

Belongs to the TrpB family. Tetramer of two alpha and two beta chains. The cofactor is pyridoxal 5'-phosphate.

The enzyme catalyses (1S,2R)-1-C-(indol-3-yl)glycerol 3-phosphate + L-serine = D-glyceraldehyde 3-phosphate + L-tryptophan + H2O. It participates in amino-acid biosynthesis; L-tryptophan biosynthesis; L-tryptophan from chorismate: step 5/5. The beta subunit is responsible for the synthesis of L-tryptophan from indole and L-serine. This Prochlorococcus marinus (strain MIT 9301) protein is Tryptophan synthase beta chain.